A 299-amino-acid chain; its full sequence is uncharacterized protein (299 aa).

The chain crosses the membrane as a helical span at residues 4–20; it reads LFFIFVMLIVLLCGCTS.

The protein resides in the membrane. This is an uncharacterized protein from Methanocaldococcus jannaschii (strain ATCC 43067 / DSM 2661 / JAL-1 / JCM 10045 / NBRC 100440) (Methanococcus jannaschii).